Consider the following 174-residue polypeptide: CASP-like protein 4D2 (174 aa).

At 1–14 (MAPPPPSPPPVSLK) the chain is on the cytoplasmic side. A helical membrane pass occupies residues 15 to 35 (VSLLLLRVLTGVFLVIALIIL). Topologically, residues 36-60 (STNSVTIVSQGSALKFHFKDVYAYR) are extracellular. A helical transmembrane segment spans residues 61–81 (YMLSAAVIGLLYAVIQLFFTI). Residues 82-150 (SEFATGMKNP…FFSRGYASAS (69 aa)) lie on the Cytoplasmic side of the membrane. The chain crosses the membrane as a helical span at residues 151–171 (LLLFSFICLAVLSVFSSLAIA). Topologically, residues 172 to 174 (KRN) are extracellular.

Belongs to the Casparian strip membrane proteins (CASP) family. In terms of assembly, homodimer and heterodimers.

The protein resides in the cell membrane. The sequence is that of CASP-like protein 4D2 from Arabidopsis lyrata subsp. lyrata (Lyre-leaved rock-cress).